The sequence spans 153 residues: SsrA-binding protein (153 aa).

The protein belongs to the SmpB family.

It localises to the cytoplasm. Its function is as follows. Required for rescue of stalled ribosomes mediated by trans-translation. Binds to transfer-messenger RNA (tmRNA), required for stable association of tmRNA with ribosomes. tmRNA and SmpB together mimic tRNA shape, replacing the anticodon stem-loop with SmpB. tmRNA is encoded by the ssrA gene; the 2 termini fold to resemble tRNA(Ala) and it encodes a 'tag peptide', a short internal open reading frame. During trans-translation Ala-aminoacylated tmRNA acts like a tRNA, entering the A-site of stalled ribosomes, displacing the stalled mRNA. The ribosome then switches to translate the ORF on the tmRNA; the nascent peptide is terminated with the 'tag peptide' encoded by the tmRNA and targeted for degradation. The ribosome is freed to recommence translation, which seems to be the essential function of trans-translation. The sequence is that of SsrA-binding protein from Desulforudis audaxviator (strain MP104C).